Consider the following 632-residue polypeptide: Protein EAP1 (632 aa).

Disordered regions lie at residues 1–80 (MELN…KKNK), 149–204 (MGPP…DDEE), and 248–313 (KSKG…PSLS). Composition is skewed to polar residues over residues 7–38 (SIISSSQFSGELSDSDTAAATHKSQQAISNLF) and 54–69 (VESSTDSSNISVATSG). Serine 30 is subject to Phosphoserine. Serine 281 and serine 282 each carry phosphoserine. A compositionally biased stretch (basic and acidic residues) spans 288–298 (NLKRQDKKEES). Residues serine 327 and serine 344 each carry the phosphoserine modification. The tract at residues 347–378 (SLPSLDNNNQVPSSNVSVVNNDGNSTPHQSGS) is disordered. Positions 353–371 (NNNQVPSSNVSVVNNDGNS) are enriched in low complexity. Serine 387 carries the phosphoserine modification. Disordered regions lie at residues 429–541 (QHPP…PPPP) and 587–632 (QGNF…KNIK). Residue 440-447 (GLLNKGKS) participates in ATP binding. The span at 474 to 486 (PNFPQRMMPPPPG) shows a compositional bias: pro residues. The span at 492 to 505 (KDSKDVNKKEDRQL) shows a compositional bias: basic and acidic residues. Polar residues-rich tracts occupy residues 507–516 (QNKNPNGTRN), 590–603 (FPPNFQQGFGSNSP), and 610–621 (INANGKNVTNQL).

Interacts with SMY2, SYH1 and eIF4E.

Its subcellular location is the cytoplasm. Functionally, can regulate translation through binding to eIF4E. Competes with eIF4G and p20 for binding to eIF4E in vivo and inhibits cap-dependent translation in vitro. Plays a role in cell growth and is implicated in the TOR signaling cascade. Functions independently of eIF4E to maintain genetic stability and to attenuate GCN4 translation upon TOR inactivation. The sequence is that of Protein EAP1 (EAP1) from Saccharomyces cerevisiae (strain ATCC 204508 / S288c) (Baker's yeast).